The following is a 608-amino-acid chain: Bifunctional lycopene cyclase/phytoene synthase (608 aa).

The interval 1-240 is lycopene beta-cyclase; that stretch reads MSILTYLEFH…LVFATCAIDR (240 aa). Transmembrane regions (helical) follow at residues 3–23, 37–56, 80–97, 117–137, 150–170, 175–195, and 218–238; these read ILTY…ALCW, YKFL…NYIV, YMFF…SNFV, LLVR…AWHL, ILWY…EYIL, AVLL…IVAI, and VEEC…TCAI. The tract at residues 247 to 608 is phytoene synthase; it reads LYKSSVQNQN…ARKIKSFFVD (362 aa).

The protein in the N-terminal section; belongs to the lycopene beta-cyclase family. It in the C-terminal section; belongs to the phytoene/squalene synthase family.

Its subcellular location is the membrane. It carries out the reaction all-trans-lycopene = gamma-carotene. The catalysed reaction is gamma-carotene = all-trans-beta-carotene. The enzyme catalyses 2 (2E,6E,10E)-geranylgeranyl diphosphate = 15-cis-phytoene + 2 diphosphate. It functions in the pathway carotenoid biosynthesis; beta-carotene biosynthesis. The protein operates within carotenoid biosynthesis; phytoene biosynthesis; all-trans-phytoene from geranylgeranyl diphosphate: step 1/1. Bifunctional enzyme that catalyzes the reactions from geranylgeranyl diphosphate to phytoene (phytoene synthase) and lycopene to beta-carotene via the intermediate gamma-carotene (lycopene cyclase). The protein is Bifunctional lycopene cyclase/phytoene synthase of Blakeslea trispora (Choanephora trispora).